Consider the following 393-residue polypeptide: ATP phosphoribosyltransferase regulatory subunit (393 aa).

Belongs to the class-II aminoacyl-tRNA synthetase family. HisZ subfamily. In terms of assembly, heteromultimer composed of HisG and HisZ subunits.

Its subcellular location is the cytoplasm. It functions in the pathway amino-acid biosynthesis; L-histidine biosynthesis; L-histidine from 5-phospho-alpha-D-ribose 1-diphosphate: step 1/9. Its function is as follows. Required for the first step of histidine biosynthesis. May allow the feedback regulation of ATP phosphoribosyltransferase activity by histidine. The protein is ATP phosphoribosyltransferase regulatory subunit of Shouchella clausii (strain KSM-K16) (Alkalihalobacillus clausii).